A 466-amino-acid chain; its full sequence is Probable WRKY transcription factor 32 (466 aa).

Disordered stretches follow at residues 1 to 45 (MEED…MEDL) and 140 to 166 (SVPT…PRTP). Basic and acidic residues predominate over residues 8 to 38 (DEAKTYTVEKSEKVEPEKDGLSQFRDEEKSL). The WRKY 1 DNA-binding region spans 162 to 226 (VPRTPARDGY…NKGLHTHEPP (65 aa)). The Zn(2+) site is built by Cys-193, Cys-198, His-221, and His-223. The disordered stretch occupies residues 284–317 (HCENEAVEEPEPKRRLKKDNSQSSDSVSKPGKKN). Residues 325 to 390 (GDVGICGDGY…YKGVHNHDMP (66 aa)) constitute a DNA-binding region (WRKY 2). Positions 356, 361, 385, and 387 each coordinate Zn(2+). The interval 410-439 (TSMRTRTDDQVNIPTSSQCSVGRESEKQSK) is disordered. Positions 419–429 (QVNIPTSSQCS) are enriched in polar residues.

This sequence belongs to the WRKY group I family.

The protein localises to the nucleus. In terms of biological role, transcription factor. Interacts specifically with the W box (5'-(T)TGAC[CT]-3'), a frequently occurring elicitor-responsive cis-acting element. The chain is Probable WRKY transcription factor 32 (WRKY32) from Arabidopsis thaliana (Mouse-ear cress).